Reading from the N-terminus, the 576-residue chain is Putative export ATP-binding/permease protein RP696 (576 aa).

One can recognise an ABC transmembrane type-1 domain in the interval 20 to 303; the sequence is LIIVMISLLS…IFELLSEMHL (284 aa). 6 helical membrane passes run 21-41, 61-81, 135-155, 158-178, 242-262, and 277-297; these read IIVM…GSIF, ILYI…RSYF, FLSF…LMFF, FKLA…LIKF, ALFF…IVWI, and IISF…IFEL. Residues 336–572 enclose the ABC transporter domain; sequence IEFKNVDFTY…SEIYRNICRE (237 aa). 371-378 is an ATP binding site; the sequence is GRSGAGKS.

Belongs to the ABC transporter superfamily. Homodimer.

It is found in the cell inner membrane. In terms of biological role, part of an ABC transporter complex. Transmembrane domains (TMD) form a pore in the inner membrane and the ATP-binding domain (NBD) is responsible for energy generation. This chain is Putative export ATP-binding/permease protein RP696, found in Rickettsia prowazekii (strain Madrid E).